A 241-amino-acid chain; its full sequence is Chloride intracellular channel protein 1 (241 aa).

Residue A2 is modified to N-acetylalanine. A required for insertion into the membrane region spans residues 2–90 (AEEQPQVELF…EEFLEAVLCP (89 aa)). K13 carries the N6-acetyllysine modification. Positions 24 to 27 (CPFS) match the G-site motif. A disulfide bond links C24 and C59. The chain crosses the membrane as a helical span at residues 26–46 (FSQRLFMVLWLKGVTFNVTTV). The region spanning 93–233 (YPKLAALNPE…PDDEEIELAY (141 aa)) is the GST C-terminal domain. At K119 the chain carries N6-acetyllysine. Position 121 is a phosphoserine (S121). At K131 the chain carries N6-acetyllysine. Phosphoserine occurs at positions 156 and 211. Phosphotyrosine is present on Y233.

Belongs to the chloride channel CLIC family. As to quaternary structure, monomer. Homodimer (in vitro). Interacts with TRAPPC2. Dimerization requires a conformation change that leads to the exposure of a large hydrophobic surface. In vivo, this may lead to membrane insertion. Expressed in neonatal and adult cardiomyocytes (at protein level).

Its subcellular location is the nucleus. The protein resides in the nucleus membrane. It localises to the cytoplasm. The protein localises to the cell membrane. It is found in the endoplasmic reticulum. The catalysed reaction is L-dehydroascorbate + 2 glutathione = glutathione disulfide + L-ascorbate. It carries out the reaction chloride(in) = chloride(out). It catalyses the reaction iodide(out) = iodide(in). The enzyme catalyses thiocyanate(in) = thiocyanate(out). The catalysed reaction is nitrate(in) = nitrate(out). It carries out the reaction bromide(in) = bromide(out). It catalyses the reaction fluoride(in) = fluoride(out). In the soluble state, catalyzes glutaredoxin-like thiol disulfide exchange reactions with reduced glutathione as electron donor. Reduces selenite and dehydroascorbate and may act as an antioxidant during oxidative stress response. Can insert into membranes and form voltage-dependent multi-ion conductive channels. Membrane insertion seems to be redox-regulated and may occur only under oxidizing conditions. Involved in regulation of the cell cycle. The polypeptide is Chloride intracellular channel protein 1 (Rattus norvegicus (Rat)).